Consider the following 229-residue polypeptide: Large ribosomal subunit protein uL1 (229 aa).

This sequence belongs to the universal ribosomal protein uL1 family. Part of the 50S ribosomal subunit.

Its function is as follows. Binds directly to 23S rRNA. The L1 stalk is quite mobile in the ribosome, and is involved in E site tRNA release. Functionally, protein L1 is also a translational repressor protein, it controls the translation of the L11 operon by binding to its mRNA. This is Large ribosomal subunit protein uL1 from Haemophilus ducreyi (strain 35000HP / ATCC 700724).